Reading from the N-terminus, the 218-residue chain is Claudin-5 (218 aa).

Over 1-7 (MGSAALE) the chain is Cytoplasmic. A helical membrane pass occupies residues 8-28 (ILGLVLCLVGWVGLILACGLP). At 29–81 (MWQVTAFLDHNIVTAQTTWKGLWMSCVVQSTGHMQCKVYESVLALSAEVQAAR) the chain is on the extracellular side. The chain crosses the membrane as a helical span at residues 82 to 102 (ALTVGAVLLALVALFVTLTGA). At 103–123 (QCTTCVAPGPVKARVALTGGA) the chain is on the cytoplasmic side. Residues 124–144 (LYAVCGLLALVPLCWFANIVV) traverse the membrane as a helical segment. Over 145–160 (REFYDPTVPVSQKYEL) the chain is Extracellular. Residues 161-181 (GAALYIGWAASALLMCGGGLV) traverse the membrane as a helical segment. The Cytoplasmic segment spans residues 182–218 (CCGAWVCTGRPEFSFPVKYSAPRRPTANGDYDKKNYV). The segment at 217 to 218 (YV) is interactions with TJP1, TJP2 and TJP3.

Belongs to the claudin family. Interacts with MPDZ. Directly interacts with TJP1/ZO-1, TJP2/ZO-2 and TJP3/ZO-3. As to expression, widely expressed with highest levels in the lung.

Its subcellular location is the cell junction. It localises to the tight junction. The protein resides in the cell membrane. Its function is as follows. Plays a major role in tight junction-specific obliteration of the intercellular space, through calcium-independent cell-adhesion activity. The polypeptide is Claudin-5 (Cldn5) (Mus musculus (Mouse)).